A 461-amino-acid polypeptide reads, in one-letter code: Bifunctional protein HldE (461 aa).

The ribokinase stretch occupies residues M1 to I315. Residue N191–E194 coordinates ATP. Residue D260 is part of the active site. The interval F332–D461 is cytidylyltransferase.

In the N-terminal section; belongs to the carbohydrate kinase PfkB family. The protein in the C-terminal section; belongs to the cytidylyltransferase family. As to quaternary structure, homodimer.

The enzyme catalyses D-glycero-beta-D-manno-heptose 7-phosphate + ATP = D-glycero-beta-D-manno-heptose 1,7-bisphosphate + ADP + H(+). The catalysed reaction is D-glycero-beta-D-manno-heptose 1-phosphate + ATP + H(+) = ADP-D-glycero-beta-D-manno-heptose + diphosphate. It functions in the pathway nucleotide-sugar biosynthesis; ADP-L-glycero-beta-D-manno-heptose biosynthesis; ADP-L-glycero-beta-D-manno-heptose from D-glycero-beta-D-manno-heptose 7-phosphate: step 1/4. It participates in nucleotide-sugar biosynthesis; ADP-L-glycero-beta-D-manno-heptose biosynthesis; ADP-L-glycero-beta-D-manno-heptose from D-glycero-beta-D-manno-heptose 7-phosphate: step 3/4. Its pathway is bacterial outer membrane biogenesis; LPS core biosynthesis. Its function is as follows. Catalyzes the phosphorylation of D-glycero-D-manno-heptose 7-phosphate at the C-1 position to selectively form D-glycero-beta-D-manno-heptose-1,7-bisphosphate. In terms of biological role, catalyzes the ADP transfer from ATP to D-glycero-beta-D-manno-heptose 1-phosphate, yielding ADP-D-glycero-beta-D-manno-heptose. This Helicobacter pylori (strain ATCC 700392 / 26695) (Campylobacter pylori) protein is Bifunctional protein HldE.